We begin with the raw amino-acid sequence, 434 residues long: Alpha-enolase (434 aa).

S2 carries the N-acetylserine modification. Residue S40 coordinates Mg(2+). Position 44 is a phosphotyrosine (Y44). K60 bears the N6-acetyllysine; alternate mark. Residue K60 is modified to N6-succinyllysine; alternate. K71 is subject to N6-acetyllysine. K89 is modified (N6-acetyllysine; alternate). Residue K89 is modified to N6-succinyllysine; alternate. N6-acetyllysine is present on residues K92 and K126. The substrate site is built by H158 and E167. K193 and K199 each carry N6-acetyllysine. At K202 the chain carries N6-acetyllysine; alternate. K202 participates in a covalent cross-link: Glycyl lysine isopeptide (Lys-Gly) (interchain with G-Cter in SUMO2); alternate. E210 functions as the Proton donor in the catalytic mechanism. An N6-acetyllysine; alternate mark is found at K228 and K233. Residue K228 is modified to N6-succinyllysine; alternate. The residue at position 228 (K228) is an N6-(2-hydroxyisobutyryl)lysine; alternate. Residue K233 is modified to N6-malonyllysine; alternate. D245 provides a ligand contact to Mg(2+). S254 carries the phosphoserine modification. An N6-acetyllysine modification is found at K256. At S263 the chain carries Phosphoserine. K281 bears the N6-acetyllysine; alternate mark. K281 is modified (N6-(2-hydroxyisobutyryl)lysine; alternate). Y287 carries the post-translational modification Phosphotyrosine. The residue at position 291 (S291) is a Phosphoserine. Residues E293 and D318 each coordinate Mg(2+). 2 residues coordinate substrate: E293 and D318. N6-acetyllysine occurs at positions 335 and 343. Residue K343 is the Proton acceptor of the active site. Substrate is bound by residues 370 to 373 (SHRS) and K394. The segment at 405–434 (AKYNQILRIEEELGSKAKFAGRSFRNPLAK) is required for interaction with PLG. K406 is modified (N6-acetyllysine). K420 carries the post-translational modification N6-acetyllysine; alternate. N6-succinyllysine; alternate is present on K420. K420 is subject to N6-malonyllysine; alternate.

Belongs to the enolase family. As to quaternary structure, mammalian enolase is composed of 3 isozyme subunits, alpha, beta and gamma, which can form homodimers or heterodimers which are cell-type and development-specific. ENO1 interacts with PLG in the neuronal plasma membrane and promotes its activation. The C-terminal lysine is required for this binding. In vitro, interacts with several glycolytic enzymes including PKM, PGM, CKM and aldolase. Also binds troponin, in vitro. Interacts with ENO4 and PGAM2. Interacts with CMTM6. It depends on Mg(2+) as a cofactor. ISGylated. In terms of processing, lysine 2-hydroxyisobutyrylation (Khib) by p300/EP300 activates the phosphopyruvate hydratase activity. Testis. Found in the principal piece of sperm tail (at protein level). The alpha/alpha homodimer is expressed in embryo and in most adult tissues. The alpha/beta heterodimer and the beta/beta homodimer are found in striated muscle, and the alpha/gamma heterodimer and the gamma/gamma homodimer in neurons. In striated muscle, expression of ENO1 appears to be independent of fiber type.

The protein localises to the cytoplasm. It localises to the cell membrane. It carries out the reaction (2R)-2-phosphoglycerate = phosphoenolpyruvate + H2O. It functions in the pathway carbohydrate degradation; glycolysis; pyruvate from D-glyceraldehyde 3-phosphate: step 4/5. Its function is as follows. Glycolytic enzyme the catalyzes the conversion of 2-phosphoglycerate to phosphoenolpyruvate. In addition to glycolysis, involved in various processes such as growth control, hypoxia tolerance and allergic responses. May also function in the intravascular and pericellular fibrinolytic system due to its ability to serve as a receptor and activator of plasminogen on the cell surface of several cell-types such as leukocytes and neurons. Stimulates immunoglobulin production. The sequence is that of Alpha-enolase (Eno1) from Mus musculus (Mouse).